The sequence spans 2715 residues: Histone-lysine N-methyltransferase 2B (2715 aa).

A compositionally biased stretch (gly residues) spans 1-11; sequence MAAAAGGGSCP. 4 disordered regions span residues 1–65, 81–302, 320–518, and 532–771; these read MAAA…GEDT, RRLW…GGLP, SLGL…PKST, and VSAR…QMPP. A2 carries the post-translational modification N-acetylalanine. Low complexity predominate over residues 12–24; sequence GPGSARGRFPGRP. The Menin-binding motif (MBM) signature appears at 17–36; that stretch reads RGRFPGRPRGAGGGGGRGGR. 2 stretches are compositionally biased toward gly residues: residues 25–38 and 49–60; these read RGAG…GRGN and RGGGATGPGGAE. A DNA-binding region (a.T hook 1) is located at residues 37 to 44; the sequence is GNGAERVR. Acidic residues predominate over residues 109–123; that stretch reads PEEESSDGESDEEEF. Residues 110–117 constitute a DNA-binding region (a.T hook 2); that stretch reads EEESSDGE. Residues S113, S114, and S118 each carry the phosphoserine modification. The span at 144-158 shows a compositional bias: basic residues; it reads QRGRAPRGRGRKHKT. The segment covering 160–176 has biased composition (pro residues); that stretch reads PLPPPRLADVAPTPPKT. A compositionally biased stretch (low complexity) spans 199-208; the sequence is RAQAPQAPRS. Phosphoserine is present on S351. The segment at residues 357 to 365 is a DNA-binding region (a.T hook 3); that stretch reads QEQKLDDEE. Positions 361 to 374 are enriched in acidic residues; that stretch reads LDDEEEEKKEEEEK. The segment covering 375 to 387 has biased composition (basic and acidic residues); it reads DKEGEEKEERAVA. Positions 401–449 are enriched in pro residues; that stretch reads LPPPPLTPPAPSPPPPLPPPSTSPPPPLCPPPPPPVSPPPLPSPPPPPA. The segment covering 545 to 556 has biased composition (basic and acidic residues); it reads RFMDEDPPKPPK. The span at 568–596 shows a compositional bias: pro residues; it reads TTSPPVPQEPAPVPSPPRAPTPPSTPVPL. Residues 597–608 show a composition bias toward basic and acidic residues; that stretch reads PEKRRSILREPT. A compositionally biased stretch (pro residues) spans 618 to 637; the sequence is LPPPPPAPPPPPAPSPPPAP. Low complexity predominate over residues 731-751; it reads PQTQAQLLQPLQALQTQLLPQ. Positions 752-769 are enriched in pro residues; it reads ALPPPQPQLQPPPSPQQM. K805 participates in a covalent cross-link: Glycyl lysine isopeptide (Lys-Gly) (interchain with G-Cter in SUMO2). Disordered regions lie at residues 819-868 and 894-959; these read PLSP…GPRI and SALP…HHGK. Residues S821, S844, and S861 each carry the phosphoserine modification. The span at 836–857 shows a compositional bias: basic and acidic residues; the sequence is ISDRGPVRSEDESVEAKRERPS. Residues 907–917 are compositionally biased toward low complexity; it reads EDTSSASETES. A Phosphoserine modification is found at S936. Residues 948–959 show a composition bias toward basic residues; sequence TPRRSLPSHHGK. Residues 959–1006 form a CXXC-type zinc finger; sequence KKMRMARCGHCRGCLRVQDCGSCVNCLDKPKFGGPNTKKQCCVYRKCD. Zn(2+) is bound by residues C966, C969, C972, C978, C981, C984, C1000, and C1005. A disordered region spans residues 1027 to 1132; sequence LLPWDSDESP…RPRKPTLQPV (106 aa). 4 positions are modified to phosphoserine: S1032, S1035, S1092, and S1095. A Glycyl lysine isopeptide (Lys-Gly) (interchain with G-Cter in SUMO2) cross-link involves residue K1136. Residues 1146 to 1166 are disordered; sequence LAPGPFASFPNGWTGKQKSPD. 3 PHD-type zinc fingers span residues 1201–1252, 1249–1303, and 1335–1396; these read PMVC…CKFC, CKFC…CVRC, and GNYC…CAGA. Positions 1404-1504 constitute a Bromo domain; it reads ALSGALQGGL…GLLLKLLESA (101 aa). The disordered stretch occupies residues 1545-1567; the sequence is QQEPETPESGQPPGDPSAAFQGK. The C2HC pre-PHD-type zinc finger occupies 1578-1618; the sequence is PRQCALCLKYGDADSKEAGRLLYIGQNEWTHVNCAIWSAEV. Residues 1639-1686 form a PHD-type 4 zinc finger; the sequence is MRCELCLKPGATVGCCLSSCLSNFHFMCARASYCIFQDDKKVFCQKHT. Positions 1727-1783 constitute an FYR N-terminal domain; it reads AINVLIGSIRIDSLGTLSDLSDCEGRLFPIGYQCSRLYWSTVDARRRCWYRCRILEY. 4 disordered regions span residues 1806–1978, 2008–2093, 2118–2162, and 2280–2412; these read HSPA…PDFE, VAAG…VVRA, LKNL…PTRT, and RVST…RTGP. Positions 1876 to 1894 are enriched in low complexity; sequence PLGGVSFGPLPSPGSPSSL. Phosphoserine occurs at positions 1930 and 1936. A compositionally biased stretch (pro residues) spans 1960 to 1972; the sequence is PPGPAPSPPPPED. A compositionally biased stretch (acidic residues) spans 2062-2072; sequence DGVDDGTDSEA. A phosphothreonine mark is found at T2068 and T2083. A compositionally biased stretch (polar residues) spans 2144-2153; that stretch reads NGSQPSQGLT. Residues S2288 and S2348 each carry the phosphoserine modification. The span at 2342 to 2351 shows a compositional bias: low complexity; that stretch reads EPAGEESPGP. Positions 2359 to 2373 are enriched in pro residues; sequence LPLPEDGPPQVPDGP. The FYR C-terminal domain maps to 2411–2492; the sequence is GPHLRFEISS…QRCQHYKFRY (82 aa). The WDR5 interaction motif (WIN) motif lies at 2508-2513; sequence GAARAE. Positions 2575-2691 constitute an SET domain; sequence EAVGVYRSAI…RGEELTYDYK (117 aa). Residues H2585, R2587, Y2629, and 2652–2653 each bind S-adenosyl-L-methionine; that span reads NH. C2655 and C2703 together coordinate Zn(2+). Positions 2699 to 2715 constitute a Post-SET domain; the sequence is NKLPCNCGAKRCRRFLN. S-adenosyl-L-methionine is bound at residue N2704. Zn(2+) is bound by residues C2705 and C2710.

This sequence belongs to the class V-like SAM-binding methyltransferase superfamily. Histone-lysine methyltransferase family. TRX/MLL subfamily. Component of the menin-associated histone methyltransferase complex, at least composed of KMT2B/MLL4, ASH2L, RBBP5, WDR5, DPY30, MEN1; the complex interacts with POLR2A and POLR2B via MEN1. Interacts with NFE2. Interacts with KDM6B. Interacts (via WIN motif) with WDR5. Interacts (via MBM motif) with MEN1. Forms a core complex with the evolutionary conserved subcomplex WRAD composed of WDR5, RBBP5, ASH2L/ASH2 and DPY30 subunits; WRAD differentially stimulates the methyltransferase activity. In terms of tissue distribution, widely expressed. Highest levels in testis. Also found in brain with higher expression in the cerebellum than in any other region, bone marrow, heart, muscle, kidney, placenta, spleen, thymus, prostate, ovary, intestine, colon, peripheral blood lymphocytes and pancreas. Often amplified in pancreatic carcinomas.

It localises to the nucleus. The catalysed reaction is L-lysyl(4)-[histone H3] + S-adenosyl-L-methionine = N(6)-methyl-L-lysyl(4)-[histone H3] + S-adenosyl-L-homocysteine + H(+). It catalyses the reaction N(6)-methyl-L-lysyl(4)-[histone H3] + S-adenosyl-L-methionine = N(6),N(6)-dimethyl-L-lysyl(4)-[histone H3] + S-adenosyl-L-homocysteine + H(+). Functionally, histone methyltransferase that catalyzes methyl group transfer from S-adenosyl-L-methionine to the epsilon-amino group of 'Lys-4' of histone H3 (H3K4) via a non-processive mechanism. Part of chromatin remodeling machinery predominantly forms H3K4me1 and H3K4me2 methylation marks at active chromatin sites where transcription and DNA repair take place. Likely plays a redundant role with KMT2C in enriching H3K4me1 marks on primed and active enhancer elements. Plays a central role in beta-globin locus transcription regulation by being recruited by NFE2. Plays an important role in controlling bulk H3K4me during oocyte growth and preimplantation development. Required during the transcriptionally active period of oocyte growth for the establishment and/or maintenance of bulk H3K4 trimethylation (H3K4me3), global transcriptional silencing that preceeds resumption of meiosis, oocyte survival and normal zygotic genome activation. The chain is Histone-lysine N-methyltransferase 2B (KMT2B) from Homo sapiens (Human).